The sequence spans 765 residues: 5-methyltetrahydropteroyltriglutamate--homocysteine methyltransferase (765 aa).

Lysine 18 and asparagine 116 together coordinate 5-methyltetrahydropteroyltri-L-glutamate. Residues 437-439 and glutamate 490 each bind L-homocysteine; that span reads IGS. L-methionine-binding positions include 437–439 and glutamate 490; that span reads IGS. 5-methyltetrahydropteroyltri-L-glutamate contacts are provided by residues aspartate 495, tyrosine 518, 521–522, and tryptophan 567; that span reads RC. Residue aspartate 605 participates in L-homocysteine binding. An L-methionine-binding site is contributed by aspartate 605. The Zn(2+) site is built by histidine 647, cysteine 649, histidine 658, aspartate 662, and glutamate 671. Histidine 701 (proton donor) is an active-site residue. Cysteine 733 provides a ligand contact to Zn(2+).

This sequence belongs to the vitamin-B12 independent methionine synthase family. Requires Zn(2+) as cofactor.

Its subcellular location is the cytoplasm. It carries out the reaction 5-methyltetrahydropteroyltri-L-glutamate + L-homocysteine = tetrahydropteroyltri-L-glutamate + L-methionine. It functions in the pathway amino-acid biosynthesis; L-methionine biosynthesis via de novo pathway; L-methionine from L-homocysteine (MetE route): step 1/1. In terms of biological role, catalyzes the transfer of a methyl group from 5-methyltetrahydrofolate to homocysteine resulting in methionine formation. This Mesembryanthemum crystallinum (Common ice plant) protein is 5-methyltetrahydropteroyltriglutamate--homocysteine methyltransferase (METE).